The primary structure comprises 1117 residues: Protocadherin-11 X-linked (1117 aa).

Positions Met1 to Ala23 are cleaved as a signal peptide. Residues Gln24–Lys812 are Extracellular-facing. 2 N-linked (GlcNAc...) asparagine glycosylation sites follow: Asn27 and Asn48. Cadherin domains follow at residues Asn27–Phe139, Pro140–Phe249, Lys250–Ile355, Asn362–Phe466, Thr467–Phe570, Thr571–Phe673, and Ser677–Thr795. Asn344 carries N-linked (GlcNAc...) asparagine glycosylation. Asn553 is a glycosylation site (N-linked (GlcNAc...) asparagine). A helical membrane pass occupies residues Ile813–Val833. Residues Val834–Lys1117 lie on the Cytoplasmic side of the membrane. Over residues Thr1029–Gln1039 the composition is skewed to polar residues. Positions Thr1029–Lys1117 are disordered.

In terms of tissue distribution, expressed in adrenal gland, brain, heart, kidney, lung, prostate, skeletal muscle, testis and thymus.

The protein resides in the cell membrane. In terms of biological role, potential calcium-dependent cell-adhesion protein. This is Protocadherin-11 X-linked (PCDH11X) from Sus scrofa (Pig).